Consider the following 169-residue polypeptide: Cilia- and flagella-associated protein 68 (169 aa).

Mn regions lie at residues 98–109 (TTYDTSYNNRRP) and 139–149 (KSTYMTSYSKP).

This sequence belongs to the CFAP68 family. Microtubule inner protein component of sperm flagellar doublet microtubules.

It localises to the cytoplasm. Its subcellular location is the cytoskeleton. The protein resides in the cilium axoneme. The protein localises to the flagellum axoneme. It is found in the nucleus. It localises to the cell projection. Its subcellular location is the cilium. Functionally, microtubule inner protein (MIP) part of the dynein-decorated doublet microtubules (DMTs) in cilia axoneme, which is required for motile cilia beating. The chain is Cilia- and flagella-associated protein 68 (CFAP68) from Bos taurus (Bovine).